Consider the following 379-residue polypeptide: Serine/threonine-protein kinase spe-6 (379 aa).

Positions 26-302 (WKVLRNIYSG…SQAATEHQVT (277 aa)) constitute a Protein kinase domain. ATP is bound by residues 32-40 (IYSGPFSDV) and lysine 55. The active-site Proton acceptor is the aspartate 147. The segment at 331 to 379 (ASAKLDAKDNANESMDIEFDDMPPKEGISKSLSAEKSCTKNVETARTEK) is disordered. Polar residues predominate over residues 360–372 (KSLSAEKSCTKNV).

It belongs to the protein kinase superfamily. CK1 Ser/Thr protein kinase family.

The enzyme catalyses L-seryl-[protein] + ATP = O-phospho-L-seryl-[protein] + ADP + H(+). The catalysed reaction is L-threonyl-[protein] + ATP = O-phospho-L-threonyl-[protein] + ADP + H(+). Its function is as follows. Serine/threonine-protein kinase which is involved in spermatogenesis. In spermatocytes, regulates meiosis and the localization and assembly of major sperm protein (MSP) into fibrous bodies. In addition, may suppress the initiation of spermiogenesis downstream of spe-8, spe-12, spe-27 and spe-29. This is Serine/threonine-protein kinase spe-6 from Caenorhabditis elegans.